Here is a 705-residue protein sequence, read N- to C-terminus: Translation initiation factor IF-2 (705 aa).

The segment at 40 to 124 (DDQIKALDKK…QPAAPKEIPS (85 aa)) is disordered. The span at 41-58 (DQIKALDKKFKKEQKNDN) shows a compositional bias: basic and acidic residues. Over residues 59 to 77 (KQSTQNNHQKSNNQNQNKG) the composition is skewed to low complexity. The segment covering 94 to 108 (KGNKKNNRNNKKNNK) has biased composition (basic residues). Residues 207–376 (ERPAVVTIMG…GLVAEVQELK (170 aa)) enclose the tr-type G domain. The tract at residues 216–223 (GHVDHGKT) is G1. 216–223 (GHVDHGKT) is a GTP binding site. The interval 241–245 (GITQH) is G2. Residues 262-265 (DTPG) form a G3 region. Residues 262–266 (DTPGH) and 316–319 (NKID) each bind GTP. Positions 316 to 319 (NKID) are G4. Residues 352 to 354 (SAL) form a G5 region.

This sequence belongs to the TRAFAC class translation factor GTPase superfamily. Classic translation factor GTPase family. IF-2 subfamily.

Its subcellular location is the cytoplasm. In terms of biological role, one of the essential components for the initiation of protein synthesis. Protects formylmethionyl-tRNA from spontaneous hydrolysis and promotes its binding to the 30S ribosomal subunits. Also involved in the hydrolysis of GTP during the formation of the 70S ribosomal complex. This chain is Translation initiation factor IF-2, found in Staphylococcus aureus (strain USA300).